The chain runs to 335 residues: Galactosylgalactosylxylosylprotein 3-beta-glucuronosyltransferase 3 (335 aa).

Residues 1 to 7 (MKLKLKN) lie on the Cytoplasmic side of the membrane. A helical; Signal-anchor for type II membrane protein transmembrane segment spans residues 8-28 (VFLAYFLVSIAGLLYALVQLG). The Lumenal segment spans residues 29–335 (QPCDCLPPLR…GQGSDPAIEV (307 aa)). Asp196 contributes to the Mn(2+) binding site. The active-site Proton acceptor is the Glu281. Residue Asn300 is glycosylated (N-linked (GlcNAc...) asparagine). A compositionally biased stretch (basic and acidic residues) spans 312–322 (EKPKMKQEEQL). The segment at 312–335 (EKPKMKQEEQLQRQGQGSDPAIEV) is disordered.

This sequence belongs to the glycosyltransferase 43 family. As to quaternary structure, homodimer; disulfide-linked. Interacts with PXYLP1; the interaction increases the 2-phosphoxylose phosphatase activity of PXYLP1 during completion of linkage region formation in a B3GAT3-mediated manner. The cofactor is Mn(2+). N-glycosylated. In terms of tissue distribution, liver, brain and heart. Moderate expression seen in lung, skeletal muscle, kidney and testis.

The protein resides in the golgi apparatus membrane. Its subcellular location is the golgi apparatus. It is found in the cis-Golgi network. The enzyme catalyses 3-O-(beta-D-galactosyl-(1-&gt;3)-beta-D-galactosyl-(1-&gt;4)-beta-D-xylosyl)-L-seryl-[protein] + UDP-alpha-D-glucuronate = 3-O-(beta-D-GlcA-(1-&gt;3)-beta-D-Gal-(1-&gt;3)-beta-D-Gal-(1-&gt;4)-beta-D-Xyl)-L-seryl-[protein] + UDP + H(+). It participates in protein modification; protein glycosylation. Its function is as follows. Glycosaminoglycans biosynthesis. Involved in forming the linkage tetrasaccharide present in heparan sulfate and chondroitin sulfate. Transfers a glucuronic acid moiety from the uridine diphosphate-glucuronic acid (UDP-GlcUA) to the common linkage region trisaccharide Gal-beta-1,3-Gal-beta-1,4-Xyl covalently bound to a Ser residue at the glycosaminylglycan attachment site of proteoglycans. Can also play a role in the biosynthesis of l2/HNK-1 carbohydrate epitope on glycoproteins. Highest activity seen with Gal-beta-1,3-Gal-beta-O-R (where R=naphthalenemethanol or benzyl alcohol). Stimulates 2-phosphoxylose phosphatase activity of PXYLP1 in presence of uridine diphosphate-glucuronic acid (UDP-GlcUA) during completion of linkage region formation. The polypeptide is Galactosylgalactosylxylosylprotein 3-beta-glucuronosyltransferase 3 (B3GAT3) (Cricetulus griseus (Chinese hamster)).